The chain runs to 202 residues: Peptidyl-tRNA hydrolase (202 aa).

Tyr17 contributes to the tRNA binding site. His22 serves as the catalytic Proton acceptor. Residues Phe76, Asn78, and Asn124 each contribute to the tRNA site.

The protein belongs to the PTH family. Monomer.

The protein resides in the cytoplasm. It carries out the reaction an N-acyl-L-alpha-aminoacyl-tRNA + H2O = an N-acyl-L-amino acid + a tRNA + H(+). Hydrolyzes ribosome-free peptidyl-tRNAs (with 1 or more amino acids incorporated), which drop off the ribosome during protein synthesis, or as a result of ribosome stalling. Its function is as follows. Catalyzes the release of premature peptidyl moieties from peptidyl-tRNA molecules trapped in stalled 50S ribosomal subunits, and thus maintains levels of free tRNAs and 50S ribosomes. The chain is Peptidyl-tRNA hydrolase from Nitratidesulfovibrio vulgaris (strain DSM 19637 / Miyazaki F) (Desulfovibrio vulgaris).